The sequence spans 314 residues: Deoxymugineic acid synthase 1 (314 aa).

The tract at residues 1–21 (MGAGDRTVAGMPRIGMGTAVQ) is disordered. An NADP(+)-binding site is contributed by aspartate 44. The active-site Proton donor is the tyrosine 49. Histidine 112 lines the substrate pocket. Residues 158–159 (AN), glutamine 180, 258–266 (FDEARMREN), and 273–281 (ELTEEERRR) contribute to the NADP(+) site.

The protein belongs to the aldo/keto reductase family.

It catalyses the reaction 2'-deoxymugineate + NAD(+) = 3''-deamino-3''-oxonicotianamine + NADH + H(+). It carries out the reaction 2'-deoxymugineate + NADP(+) = 3''-deamino-3''-oxonicotianamine + NADPH + H(+). It participates in siderophore biosynthesis. Functionally, catalyzes the reduction of a 3''-keto intermediate during the biosynthesis of 2'-deoxymugineic acid (DMA) from L-Met. Involved in the formation of phytosiderophores (MAs) belonging to the mugineic acid family and required to acquire iron. This is Deoxymugineic acid synthase 1 from Hordeum vulgare (Barley).